The primary structure comprises 569 residues: AP-4 complex accessory subunit Tepsin (569 aa).

The ENTH domain maps to 8 to 141 (RDRLSFLHRL…FSDALPQPPS (134 aa)). Positions 196-298 (VRPGPDNPCT…SGASREPGDL (103 aa)) are disordered. Polar residues predominate over residues 219–229 (VTPSASHTHPN). Residues 260–292 (SSPSSQNSSCTSNLSRASDSVSRSGSDSHSGAS) are compositionally biased toward low complexity. Position 400 is a phosphoserine (serine 400). The tract at residues 467–524 (VPRSPVPTPSPDTLPPALQDPGELRTQLVCSSEPGTGSEQRLENTDTPKDSSSPCPWS) is disordered. Residues 470-480 (SPVPTPSPDTL) are compositionally biased toward pro residues. The span at 494–505 (LVCSSEPGTGSE) shows a compositional bias: polar residues. A compositionally biased stretch (basic and acidic residues) spans 506-515 (QRLENTDTPK). The interval 525-535 (PNSLFAGMELV) is interaction with AP4B1. The tract at residues 559-569 (SEPSAFAFLNM) is interaction with AP4E1.

As to quaternary structure, interacts with AP4B1 and AP4E1; the interaction is direct and mediates the association of TEPSIN with the adapter-like complex 4 (AP-4), a heterotetramer composed of AP4B1, AP4E1, AP4M1 and AP4S1.

It localises to the golgi apparatus. The protein localises to the trans-Golgi network membrane. It is found in the cytoplasmic vesicle. Its subcellular location is the cytoplasm. The protein resides in the cytosol. Its function is as follows. Associates with the adapter-like complex 4 (AP-4) and may therefore play a role in vesicular trafficking of proteins at the trans-Golgi network. This chain is AP-4 complex accessory subunit Tepsin, found in Rattus norvegicus (Rat).